A 68-amino-acid chain; its full sequence is U-scoloptoxin(02)-Er1a (68 aa).

An N-terminal signal peptide occupies residues 1–20 (MIVSLRCCLLLVALLITVET). Disulfide bonds link Cys-30/Cys-52, Cys-38/Cys-58, and Cys-42/Cys-60.

Belongs to the invertebrate defensin family. As to expression, expressed by the venom gland.

Its subcellular location is the secreted. Antibacterial peptide mostly active against Gram-positive bacteria. This chain is U-scoloptoxin(02)-Er1a, found in Ethmostigmus rubripes (Giant centipede).